The sequence spans 180 residues: Transcriptional repressor NrdR (180 aa).

A zinc finger lies at 3–34; the sequence is CPYCQNTSSRVLESRSTEAGQSIRRRRECLQC. Residues 49-139 enclose the ATP-cone domain; sequence ISVLKKDKSK…VYGEFKGITD (91 aa). The interval 148-180 is disordered; the sequence is QQEERESSSSPEWSDAGEEATVIEDSSQVMASS. The span at 171–180 shows a compositional bias: polar residues; it reads EDSSQVMASS.

The protein belongs to the NrdR family. Zn(2+) serves as cofactor.

In terms of biological role, negatively regulates transcription of bacterial ribonucleotide reductase nrd genes and operons by binding to NrdR-boxes. This chain is Transcriptional repressor NrdR, found in Gloeothece citriformis (strain PCC 7424) (Cyanothece sp. (strain PCC 7424)).